The primary structure comprises 896 residues: Androgen receptor (896 aa).

The tract at residues 1–534 (MEVQLGLGRV…PIDYYFPPQK (534 aa)) is modulating. An interaction with ZNF318 region spans residues 1-563 (MEVQLGLGRV…GSCKVFFKRA (563 aa)). Disordered regions lie at residues 35 to 152 (QNPG…LSLL) and 178 to 218 (LLQQ…YLGG). Low complexity predominate over residues 54–78 (LQQQQLQQQETSPRRQQQQQQQPSE). At Ser-65 the chain carries Phosphoserine; by CDK9. At Ser-81 the chain carries Phosphoserine. Residues 178–189 (LLQQQQQQQQQQ) show a composition bias toward low complexity. Polar residues predominate over residues 190–199 (EAVSEGNSSG). Phosphotyrosine; by CSK is present on Tyr-215. The residue at position 248 (Ser-248) is a Phosphoserine. A Phosphotyrosine; by CSK and TNK2 modification is found at Tyr-259. Phosphotyrosine; by CSK is present on residues Tyr-299, Tyr-338, Tyr-349, and Tyr-354. Position 355 is a phosphotyrosine; by CSK and TNK2 (Tyr-355). Residue Lys-378 forms a Glycyl lysine isopeptide (Lys-Gly) (interchain with G-Cter in SUMO) linkage. At Tyr-385 the chain carries Phosphotyrosine; by CSK. Lys-497 participates in a covalent cross-link: Glycyl lysine isopeptide (Lys-Gly) (interchain with G-Cter in SUMO). Phosphotyrosine; by CSK is present on residues Tyr-511 and Tyr-528. An interaction with LPXN region spans residues 528 to 895 (YYFPPQKTCL…GKVKPIYFHT (368 aa)). The nuclear receptor DNA-binding region spans 535–608 (TCLICGDEAS…AGMTLGARKL (74 aa)). NR C4-type zinc fingers lie at residues 536-556 (CLIC…CGSC) and 572-596 (CASR…LRKC). An interaction with HIPK3 region spans residues 548 to 638 (YGALTCGSCK…TEEPAQKLTV (91 aa)). The tract at residues 568–895 (QKYLCASRND…GKVKPIYFHT (328 aa)) is interaction with CCAR1. The tract at residues 601–895 (MTLGARKLKK…GKVKPIYFHT (295 aa)) is interaction with KAT7. At Ser-627 the chain carries Phosphoserine; by STK4/MST1. The region spanning 645–876 (ECQPIFLNVL…DFPEMMAEII (232 aa)) is the NR LBD domain. 2 residues coordinate 17beta-hydroxy-5alpha-androstan-3-one: Asn-682 and Arg-729. Residues Lys-822 and Lys-824 each participate in a glycyl lysine isopeptide (Lys-Gly) (interchain with G-Cter in ubiquitin) cross-link. Thr-854 is a 17beta-hydroxy-5alpha-androstan-3-one binding site. A Phosphotyrosine; by CSK modification is found at Tyr-892.

This sequence belongs to the nuclear hormone receptor family. NR3 subfamily. As to quaternary structure, binds DNA as a homodimer. Part of a ternary complex containing AR, EFCAB6/DJBP and PARK7. Interacts with HIPK3 and NR0B2 in the presence of androgen. The ligand binding domain interacts with KAT7/HBO1 in the presence of dihydrotestosterone. Interacts with EFCAB6/DJBP, PQBP1, RANBP9, RBAK, SPDEF, SRA1, TGFB1I1 and RREB1. Interacts with ZMIZ1/ZIMP10 and ZMIZ2/ZMIP7 which both enhance its transactivation activity. Interacts with SLC30A9 and RAD54L2/ARIP4. Interacts with MACROD1 (via macro domain). Interacts via the ligand-binding domain with LXXLL and FXXLF motifs from NCOA1, NCOA2, NCOA3 and MAGEA11. Interacts (via nuclear receptor DNA binding domain and nuclear receptor ligand binding domain) with NCOA4. The AR N-terminal poly-Gln region binds Ran resulting in enhancement of AR-mediated transactivation. Ran-binding decreases as the poly-Gln length increases. Interacts with HIP1 (via coiled coil domain). Interacts (via ligand-binding domain) with TRIM68. Interacts with TNK2. Interacts with USP26. Interacts with RNF6. Interacts (regulated by RNF6 probably through polyubiquitination) with RNF14; regulates AR transcriptional activity. Interacts with PRMT2 and TRIM24. Interacts with RACK1. Interacts with RANBP10; this interaction enhances dihydrotestosterone-induced AR transcriptional activity. Interacts with PRPF6 in a hormone-independent way; this interaction enhances dihydrotestosterone-induced AR transcriptional activity. Interacts with STK4/MST1. Interacts with ZIPK/DAPK3. Interacts with LPXN. Interacts with MAK. Part of a complex containing AR, MAK and NCOA3. Interacts with CRY1. Interacts with CCAR1 and GATA2. Interacts with ZNF318. Interacts with BUD31. Interacts with ARID4A. Interacts with ARID4B. Interacts (via NR LBD domain) with ZBTB7A; the interaction is direct and androgen-dependent. Interacts with NCOR1. Interacts with NCOR2. Interacts with CRY2 in a ligand-dependent manner. In terms of processing, phosphorylated in prostate cancer cells in response to several growth factors including EGF. Phosphorylation is induced by c-Src kinase (CSK). Tyr-511 is one of the major phosphorylation sites and an increase in phosphorylation and Src kinase activity is associated with prostate cancer progression. Phosphorylation by TNK2 enhances the DNA-binding and transcriptional activity. Phosphorylation at Ser-65 by CDK9 regulates AR promoter selectivity and cell growth. Post-translationally, sumoylated on Lys-378 (major) and Lys-497. Ubiquitinated. Deubiquitinated by USP26. 'Lys-6' and 'Lys-27'-linked polyubiquitination by RNF6 modulates AR transcriptional activity and specificity. Palmitoylated by ZDHHC7 and ZDHHC21. Palmitoylation is required for plasma membrane targeting and for rapid intracellular signaling via ERK and AKT kinases and cAMP generation.

The protein resides in the nucleus. Its subcellular location is the cytoplasm. Functionally, steroid hormone receptors are ligand-activated transcription factors that regulate eukaryotic gene expression and affect cellular proliferation and differentiation in target tissues. Transcription factor activity is modulated by bound coactivator and corepressor proteins like ZBTB7A that recruits NCOR1 and NCOR2 to the androgen response elements/ARE on target genes, negatively regulating androgen receptor signaling and androgen-induced cell proliferation. Transcription activation is also down-regulated by NR0B2. Activated, but not phosphorylated, by HIPK3 and ZIPK/DAPK3. The protein is Androgen receptor (AR) of Sus scrofa (Pig).